Reading from the N-terminus, the 155-residue chain is Protein-export protein SecB (155 aa).

The protein belongs to the SecB family. As to quaternary structure, homotetramer, a dimer of dimers. One homotetramer interacts with 1 SecA dimer.

The protein resides in the cytoplasm. Its function is as follows. One of the proteins required for the normal export of preproteins out of the cell cytoplasm. It is a molecular chaperone that binds to a subset of precursor proteins, maintaining them in a translocation-competent state. It also specifically binds to its receptor SecA. This chain is Protein-export protein SecB, found in Escherichia fergusonii (strain ATCC 35469 / DSM 13698 / CCUG 18766 / IAM 14443 / JCM 21226 / LMG 7866 / NBRC 102419 / NCTC 12128 / CDC 0568-73).